The chain runs to 164 residues: Lipoprotein signal peptidase (164 aa).

The next 2 helical transmembrane spans lie at 68–88 and 96–116; these read TILV…LWNA and FWGL…RAMF. Catalysis depends on residues aspartate 121 and aspartate 139. The helical transmembrane segment at 134–154 threads the bilayer; sequence TFNVADSAIVVGSCLLLIDLL.

Belongs to the peptidase A8 family.

The protein resides in the cell inner membrane. It catalyses the reaction Release of signal peptides from bacterial membrane prolipoproteins. Hydrolyzes -Xaa-Yaa-Zaa-|-(S,diacylglyceryl)Cys-, in which Xaa is hydrophobic (preferably Leu), and Yaa (Ala or Ser) and Zaa (Gly or Ala) have small, neutral side chains.. Its pathway is protein modification; lipoprotein biosynthesis (signal peptide cleavage). Its function is as follows. This protein specifically catalyzes the removal of signal peptides from prolipoproteins. The polypeptide is Lipoprotein signal peptidase (Solibacter usitatus (strain Ellin6076)).